The primary structure comprises 491 residues: Probable cytosol aminopeptidase (491 aa).

Mn(2+) is bound by residues K260 and D265. The active site involves K272. D284, D343, and E345 together coordinate Mn(2+). R347 is an active-site residue.

This sequence belongs to the peptidase M17 family. Requires Mn(2+) as cofactor.

The protein resides in the cytoplasm. The catalysed reaction is Release of an N-terminal amino acid, Xaa-|-Yaa-, in which Xaa is preferably Leu, but may be other amino acids including Pro although not Arg or Lys, and Yaa may be Pro. Amino acid amides and methyl esters are also readily hydrolyzed, but rates on arylamides are exceedingly low.. It carries out the reaction Release of an N-terminal amino acid, preferentially leucine, but not glutamic or aspartic acids.. Presumably involved in the processing and regular turnover of intracellular proteins. Catalyzes the removal of unsubstituted N-terminal amino acids from various peptides. The sequence is that of Probable cytosol aminopeptidase from Rippkaea orientalis (strain PCC 8801 / RF-1) (Cyanothece sp. (strain PCC 8801)).